The sequence spans 93 residues: Small ribosomal subunit protein uS19 (93 aa).

A disordered region spans residues 1–23 (MPRSLKKGPFVDDHLQKKVDAEN). Residues 9–23 (PFVDDHLQKKVDAEN) are compositionally biased toward basic and acidic residues.

It belongs to the universal ribosomal protein uS19 family.

In terms of biological role, protein S19 forms a complex with S13 that binds strongly to the 16S ribosomal RNA. The polypeptide is Small ribosomal subunit protein uS19 (Nocardioides sp. (strain ATCC BAA-499 / JS614)).